The chain runs to 270 residues: Putative phosphoenolpyruvate synthase regulatory protein (270 aa).

ADP is bound at residue 150–157 (GVSRCGKT).

The protein belongs to the pyruvate, phosphate/water dikinase regulatory protein family. PSRP subfamily.

It carries out the reaction [pyruvate, water dikinase] + ADP = [pyruvate, water dikinase]-phosphate + AMP + H(+). The catalysed reaction is [pyruvate, water dikinase]-phosphate + phosphate + H(+) = [pyruvate, water dikinase] + diphosphate. In terms of biological role, bifunctional serine/threonine kinase and phosphorylase involved in the regulation of the phosphoenolpyruvate synthase (PEPS) by catalyzing its phosphorylation/dephosphorylation. This Shewanella oneidensis (strain ATCC 700550 / JCM 31522 / CIP 106686 / LMG 19005 / NCIMB 14063 / MR-1) protein is Putative phosphoenolpyruvate synthase regulatory protein.